The primary structure comprises 469 residues: 3-isopropylmalate dehydratase large subunit (469 aa).

Cys347, Cys410, and Cys413 together coordinate [4Fe-4S] cluster.

Belongs to the aconitase/IPM isomerase family. LeuC type 1 subfamily. As to quaternary structure, heterodimer of LeuC and LeuD. Requires [4Fe-4S] cluster as cofactor.

It carries out the reaction (2R,3S)-3-isopropylmalate = (2S)-2-isopropylmalate. It participates in amino-acid biosynthesis; L-leucine biosynthesis; L-leucine from 3-methyl-2-oxobutanoate: step 2/4. Catalyzes the isomerization between 2-isopropylmalate and 3-isopropylmalate, via the formation of 2-isopropylmaleate. This is 3-isopropylmalate dehydratase large subunit from Burkholderia pseudomallei (strain 1106a).